A 1877-amino-acid polypeptide reads, in one-letter code: MILKSFLLGNLLSLCMKIINSVVVVGLYYGFLTTFSVGPSYLFLLRARVMEEGTEKEVSATTGFITGQLMMFISIYYAPLHLALGRPHTITVLVLPYLLFHFFWKNHKHFFDYGSTTRNSMRNLSIQCVFLNNLIFQLFNHFILPSSTLARLVNIYMFRCNNKMLFVTSSFVGWLIGHILFMKWVGLVLFWIRQNNSIRSNVLIRSNKYLVSELRNSMARIFRILLFITCVYYLGRIPSPIVTKKLKETSETEEGGESEEETDVEIETTSETRGTQKEQEGSTEEDPSLCSEEKEDPDKIDETEEIRVNGKEKTKDEFHKHRPVYENSYLDGKKKIENWELGILKEDKDLFWFEKPLLTLLFDYKRWNRPLRYIKNDRFENAVRNEMSQYFFHTCPSDGKQIISFTYPPSLSTFLEMIQKKMSLCTTKPEPEDLYNNWIYINDQKINLNNEFINRIEALDRGSLAMDILEKRTRLCNDENEQEYLLEMYDPLLNGPYRGTIKKCNSRSIKDDSITPTEDSIKRIWINNIYGILSTDYREFEHKIDLFDRESLSTDIGHSLTLIIGHSLPAISKFAGESEPSLNFKRLALLAEQRRIDSENKEKCLQLLSEENTTHPNDQTIRNQSIGIEEIGKRVPRWSYKLTDDFEEQEEEDEEESTEDHEIRSRKAKRVVIYTDNDENTDTDTSTKDTTNSDRAEEVALIRYSQQSDFRRNLIKGSMRAQRRKTVTWEMFQANVHSPLFLNRIDRTSPFFSFDFDIAQIMKPLLRNWMENEPEFKTSDSEEKEAKEEEKQKKEKQEADERIFIAEIWDTIIFAQAIRGSMLVTQSILRKYIVLPSLIIAKNIGRMLLFQFPEWYEDLKGWNKEMHIKCTYNGVQLSETEFPKDWLTDGIQIKILFPFCLKPWRRSKLKLRSHHEDPLTLKKKGKKENFCFLTIWGMETELPFGSPRKQPSFFEPISKELEKIIRKVKRKFFLVLRVFKERTKWFLKLSKEKAKWVVLFIKRILKEFEKVNPISLFGLMKVHEPSEKGKDCIISNKIAHESPIQIRSMDWTNYSLTEQKMKDLANRITTIRNQIEKITKEKKKRFLTPDINISPNEIGCDDKRSESQKHIWQISKRRSAKLIRNWPYLMKSFIERIYIDIFLCTINIPIINAQLLLESTKKIIDKYIYNDETNQEGIDETNLNIIHFISTIKKSLSNTNISNKNLQIYCDLSSLSQAYVFYKLSKIKVINLYRLGSALQYHETYLFLKDRIKDYCGTQGIFDSESRHKKPQNSGMNEWKNWLRGHYQYKLSQTKWSRLVPRKWRNRVNQRRMIPNKDSKKWNSYEKEKDQLIHYDKKNDSAVDSLPSQKEKFKKHSRYDLLSHKYIIYEDGKDSSIYGSLLQVNRNQEIPYNYKTHKPKPFYVPGGIAISDYLGEEYIIDIDTDQNPDRKYFDWGILRFCFRKNNINIEPWTDMDSGTNNYQITDKKDLFSLTIHQEINPSTSNSNQKKNFFDWMGMNEEMLSRPISNLEPWFFPEFVLLSDAYKVNPRTIPIKLLLFNFHENENIQNENISENKNINGNKKKDFRISSNQKEYLDQNHEEKELLGQEDCGSDPRNQQKYIEEDYTGSDIKKRRSRKKKLSKSNEEVELDFFLKRYLFFQLRWDYSLDQRIINNIKIYCLLLRLINPNEIAISSIQKGEMFLDVMAIQKDLAFTELRKKGIFIIEPLRLSIKWDGPFYMYQTVGISLVHKSKHQINRRYREKRYVDQNHFNRSTAQHGKILVNGDENHYDLLFPEKIPSTRRRKEMRILISFNSGNGNVVNRNPVFLNGNNVRNCSQFFDEDKHFDTNKFMKFKFFLWPNYRLEDLACMNRYWFDTNNGSRFSMLRIHMYPRFIIS.

Transmembrane regions (helical) follow at residues 18 to 38 (IINS…FSVG), 64 to 84 (FITG…HLAL), 87 to 107 (PHTI…WKNH), 124 to 144 (LSIQ…HFIL), 172 to 192 (VGWL…LFWI), and 221 to 241 (IFRI…PSPI). Disordered regions lie at residues 246–313 (LKET…GKEK), 644–695 (DDFE…NSDR), and 774–795 (PEFK…QKKE). Composition is skewed to acidic residues over residues 251–268 (ETEE…EIET), 281–304 (GSTE…DETE), and 645–659 (DFEE…ESTE). The span at 685-695 (TSTKDTTNSDR) shows a compositional bias: basic and acidic residues.

The protein belongs to the TIC214 family. As to quaternary structure, part of the Tic complex.

The protein resides in the plastid. The protein localises to the chloroplast inner membrane. Functionally, involved in protein precursor import into chloroplasts. May be part of an intermediate translocation complex acting as a protein-conducting channel at the inner envelope. The protein is Protein TIC 214 of Chloranthus spicatus (Chulantree).